The sequence spans 225 residues: Peptidyl-tRNA hydrolase (225 aa).

Y14 serves as a coordination point for tRNA. Residue H19 is the Proton acceptor of the active site. TRNA contacts are provided by F64, N66, and N112. The segment at 184 to 225 (ALRMQPPKPEKPKPAAKAPEAQAPEAAPDERSALQKLADRFR) is disordered. Residues 198 to 209 (AAKAPEAQAPEA) are compositionally biased toward low complexity. Positions 211-225 (PDERSALQKLADRFR) are enriched in basic and acidic residues.

The protein belongs to the PTH family. Monomer.

The protein localises to the cytoplasm. The catalysed reaction is an N-acyl-L-alpha-aminoacyl-tRNA + H2O = an N-acyl-L-amino acid + a tRNA + H(+). In terms of biological role, hydrolyzes ribosome-free peptidyl-tRNAs (with 1 or more amino acids incorporated), which drop off the ribosome during protein synthesis, or as a result of ribosome stalling. Catalyzes the release of premature peptidyl moieties from peptidyl-tRNA molecules trapped in stalled 50S ribosomal subunits, and thus maintains levels of free tRNAs and 50S ribosomes. The sequence is that of Peptidyl-tRNA hydrolase from Cereibacter sphaeroides (strain ATCC 17023 / DSM 158 / JCM 6121 / CCUG 31486 / LMG 2827 / NBRC 12203 / NCIMB 8253 / ATH 2.4.1.) (Rhodobacter sphaeroides).